Consider the following 121-residue polypeptide: Large ribosomal subunit protein uL24 (121 aa).

The protein belongs to the universal ribosomal protein uL24 family. As to quaternary structure, part of the 50S ribosomal subunit.

One of two assembly initiator proteins, it binds directly to the 5'-end of the 23S rRNA, where it nucleates assembly of the 50S subunit. Its function is as follows. Located at the polypeptide exit tunnel on the outside of the subunit. The sequence is that of Large ribosomal subunit protein uL24 from Thermococcus kodakarensis (strain ATCC BAA-918 / JCM 12380 / KOD1) (Pyrococcus kodakaraensis (strain KOD1)).